The following is a 497-amino-acid chain: Mechanosensitive ion channel protein 1, mitochondrial (497 aa).

Residues 1–86 (MAGVRLSLLK…RAFSSKSDDF (86 aa)) constitute a mitochondrion transit peptide. A run of 5 helical transmembrane segments spans residues 152 to 172 (DVIV…VVMP), 216 to 236 (LVTF…TIAA), 238 to 258 (YFSP…LYRW), 280 to 300 (VLTL…MASA), and 305 to 325 (VAVQ…AFAA).

Belongs to the MscS (TC 1.A.23) family.

It is found in the mitochondrion membrane. Mechanosensitive channel that opens in response to stretch forces in the membrane lipid bilayer. This is Mechanosensitive ion channel protein 1, mitochondrial (MSL1) from Arabidopsis thaliana (Mouse-ear cress).